The sequence spans 129 residues: Ribulose bisphosphate carboxylase small subunit (129 aa).

Residues 109–129 are disordered; the sequence is LRMTRTESNGRSQHYMWETQR.

This sequence belongs to the RuBisCO small chain family. In terms of assembly, heterohexadecamer of 8 large and 8 small subunits.

In terms of biological role, ruBisCO catalyzes two reactions: the carboxylation of D-ribulose 1,5-bisphosphate, the primary event in carbon dioxide fixation, as well as the oxidative fragmentation of the pentose substrate. Both reactions occur simultaneously and in competition at the same active site. Although the small subunit is not catalytic it is essential for maximal activity. This Rhizobium meliloti (strain 1021) (Ensifer meliloti) protein is Ribulose bisphosphate carboxylase small subunit.